Consider the following 851-residue polypeptide: MPGKLRSGAKLGSDGAEESMETLPKPSEKKTRKEKTKSKTEEATEGMEEAVSSKAKKTNKKGPSEDDVDPPKSRKAKKQEEEPQDDTASTSKTSKKKKEPLEKQADSETKEIITEEPSEEEADMPKPKKMKKGKEANGDAGEKSPKLKNGLSQPSEEEADIPKPKKMKKGKEANGDAGEKSPKLKNGLSQPSEEEVDIPKPKKMKKGKEASGDAGEKSPRLKDGLSQPSEPKSNSSDAPGEESSSETEKEIPVEQKEGAFSNFPISEETVKLLKARGVNFLFPIQAKTFHHVYSGKDLIAQARTGTGKTFSFAIPLIEKLQGGLQERKRGRAPQVLVLAPTRELANQVSKDFSDITKKLSVACFYGGTPYGGQIERMRSGIDILVGTPGRIKDHLQNGKLDLTKLKHVVLDEVDQMLDMGFADQVEEILCVAYKKDSEDNPQTLLFSATCPHWVFNVAKKYMKSTYEQVDLIGKKTQKAAITVEHLAIKCHWTERAAVIGDVIRVYSGHQGRTIIFCETKKDAQELSQNTCIKQDAQSLHGDIPQKQREITLKGFRNGNFGVLVATNVAARGLDIPEVDLVVQSCPPKDVESYIHRSGRTGRAGRTGVCICFYQNKEEYQLAQVEQKAGIKFKRIGVPSATEIIKASSKDAIRLLDSVPPTAISHFKQSAEKLIEEKGAVEALAAALAHISGATSVDQRSLINSQAGFVTMILRCSIEMPNISYAWKELKEQLGESIDAKVKGMVFLKGKLGVCFDVRTEAVTEIQEKWHDSRRWQLTVATEQPELEGPPDGYRGRMGQRDGSRGAFRGQRGGSRNFRGQGQRGGSRNFRGQRPGGGNRGQKRSFSKAFGQ.

A disordered region spans residues Met-1–Phe-260. Phosphoserine occurs at positions 7 and 13. Basic and acidic residues-rich tracts occupy residues Pro-26–Glu-42 and Glu-99–Ile-113. Lys-39 is modified (N6-acetyllysine). Repeat copies occupy residues Pro-117–Gln-153, Pro-154–Gln-190, and Pro-191–Gln-227. A 3 X 37 AA tandem repeats region spans residues Pro-117 to Gln-227. Ser-118 bears the Phosphoserine mark. Over residues Gly-133–Pro-145 the composition is skewed to basic and acidic residues. Lys-134 bears the N6-acetyllysine mark. Phosphoserine is present on residues Ser-144, Ser-155, Ser-181, Ser-192, Ser-218, Ser-236, Ser-243, Ser-244, and Ser-245. Basic and acidic residues predominate over residues Gly-170–Pro-182. A compositionally biased stretch (basic and acidic residues) spans Gly-207 to Asp-223. Positions Ser-226 to Asp-237 are enriched in polar residues. Residues Glu-246–Glu-257 are compositionally biased toward basic and acidic residues. Residues Gly-258–Ala-286 carry the Q motif motif. One can recognise a Helicase ATP-binding domain in the interval Phe-289–Gln-468. ATP is bound at residue Ala-302–Thr-309. Phosphothreonine is present on Thr-368. The DEAD box signature appears at Asp-411 to Asp-414. Residues Asp-501–Lys-645 enclose the Helicase C-terminal domain. Ser-639 is modified (phosphoserine). Position 672 is an N6-acetyllysine (Lys-672). The interval Gln-783–Gln-851 is disordered. 3 consecutive repeat copies span residues Phe-807–Arg-811, Phe-817–Arg-823, and Phe-829–Arg-833. Residues Phe-807–Arg-833 are 3 X 5 AA repeats. Lys-847 bears the N6-acetyllysine mark.

The protein belongs to the DEAD box helicase family. DDX21/DDX50 subfamily. As to quaternary structure, homodimer; homodimerizes via its N-terminus. Found in a multi-helicase-TICAM1 complex at least composed of DHX36, DDX1, DDX21 and TICAM1; this complex exists in resting cells with or without poly(I:C) RNA ligand stimulation. Interacts (via C-terminus) with TICAM1 (via TIR domain). Interacts with DHX36 (via C-terminus); this interaction serves as bridges to TICAM1. Interacts (via C-terminus) with DDX1 (via B30.2/SPRY domain); this interaction serves as bridges to TICAM1. Component of the B-WICH complex, at least composed of SMARCA5/SNF2H, BAZ1B/WSTF, SF3B1, DEK, MYO1C, ERCC6, MYBBP1A and DDX21. Interacts with C1QBP. Interacts with JUN. Interacts with WDR46. Interacts with MCM3AP. Interacts with WDR43. Interacts with KPNA3. Interacts with GID4. In terms of processing, acetylation by CREBBP/CBP inhibits the helicase activity. Deacetylation by SIRT7 promotes the helicase activity and overcomes R-loop-mediated stalling of RNA polymerases. In terms of tissue distribution, highly expressed in liver and testis. Expressed at lower level in brain, lungs, and skeletal muscle.

Its subcellular location is the nucleus. The protein localises to the nucleolus. It is found in the nucleoplasm. It localises to the cytoplasm. The protein resides in the cytosol. Its subcellular location is the mitochondrion. It carries out the reaction ATP + H2O = ADP + phosphate + H(+). Its activity is regulated as follows. Acetylation inhibits the helicase activity. In terms of biological role, RNA helicase that acts as a sensor of the transcriptional status of both RNA polymerase (Pol) I and II: promotes ribosomal RNA (rRNA) processing and transcription from polymerase II (Pol II). Binds various RNAs, such as rRNAs, snoRNAs, 7SK and, at lower extent, mRNAs. In the nucleolus, localizes to rDNA locus, where it directly binds rRNAs and snoRNAs, and promotes rRNA transcription, processing and modification. Required for rRNA 2'-O-methylation, possibly by promoting the recruitment of late-acting snoRNAs SNORD56 and SNORD58 with pre-ribosomal complexes. In the nucleoplasm, binds 7SK RNA and is recruited to the promoters of Pol II-transcribed genes: acts by facilitating the release of P-TEFb from inhibitory 7SK snRNP in a manner that is dependent on its helicase activity, thereby promoting transcription of its target genes. Functions as cofactor for JUN-activated transcription: required for phosphorylation of JUN at 'Ser-77'. Can unwind double-stranded RNA (helicase) and can fold or introduce a secondary structure to a single-stranded RNA (foldase). Together with SIRT7, required to prevent R-loop-associated DNA damage and transcription-associated genomic instability: deacetylation by SIRT7 activates the helicase activity, thereby overcoming R-loop-mediated stalling of RNA polymerases. Involved in rRNA processing. May bind to specific miRNA hairpins. Component of a multi-helicase-TICAM1 complex that acts as a cytoplasmic sensor of viral double-stranded RNA (dsRNA) and plays a role in the activation of a cascade of antiviral responses including the induction of pro-inflammatory cytokines via the adapter molecule TICAM1. The chain is Nucleolar RNA helicase 2 (Ddx21) from Mus musculus (Mouse).